We begin with the raw amino-acid sequence, 255 residues long: Ornithine decarboxylase antizyme (255 aa).

The protein belongs to the ODC antizyme family. Interacts with ODC and thereby sterically blocks ODC homodimerization.

Ornithine decarboxylase (ODC) antizyme protein that negatively regulates ODC activity and intracellular polyamine biosynthesis in response to increased intracellular polyamine levels. Binds to ODC monomers, inhibiting the assembly of the functional ODC homodimer, and targets the monomers for ubiquitin-independent proteolytic destruction by the 26S proteasome. The protein is Ornithine decarboxylase antizyme (OAZ1) of Eremothecium gossypii (strain ATCC 10895 / CBS 109.51 / FGSC 9923 / NRRL Y-1056) (Yeast).